The primary structure comprises 1352 residues: MQNEEDACLEAGYCLGTTLSSWRLHFMEEQSQSTMLMGIGIGALLTLAFVGITFFFVYRRVRRLRRAEPTPQYRFRKRDKVMFYGRKIMRKVTTLPHTLVGNTSAPRQRVRKRTKVLSLAKRILRFKKEYPTLQPKEPPPSLLEADLTEFDVKNSHLPSEVLYMLKNVRVLGHFEKPLFLELCKHMVFVQLQEGEHVFQPGEPDISIYVVQDGRLEVCIQDADGTEVVVKEVLPGDSVHSLLSILDVITGHTAPYKTVSARAAVSSTVLWLPAAAFQGVFEKYPETLVRVVQIIMVRLQRVTFLALHNYLGLTTELFNPESQAIPLLSVASVAGRAKRQMSYGPEEQLERSLRPSEFSSSDHGSSCVTVSGPLLKRSCSVPLPSNHGEVDELRQSQGSGSNTSAFQESHEGATSDLGMAYNRARILPHSDEQLGNSLASKSKKSVVAETPSAIFHYSENFRDETGACGKTDAIFRAATKDLLTLMKLDDPSLLDGRVAFLHVPAGTLVSKQGDQDVNILFVVSGMLHVYQQKIDSLEDTCLFLTHPGEMVGQLAVLTGEPLMFTIRANRDCSFLSISKAHFYEIMRKRPDVVLGVAHTVVKRMSSFVRQIDFALDWMEVEAGRAIYRQGDKSDCTYIVLSGRLRSVIRKDDGKKRLAGEYGRGDLVGVVETLTHQARATTVHAVRDSELAKLPAGALTSIKRRYPQVVTRLIHLLGEKILGSLQQGSATGHQLGFNTASSKWDLGNPPGNLSTVAALPASEDVPLTAFALELQHALSAIGPVLLLTSDNIKQRLGSAALDSIHEYRLSSWLGQQEDIHRIVLYQADGTLTPWTQRCIRQADCILIVGLGEQEPAVGELEQMLESTAVRAQKQLILLHKEDGPVPSRTVEWLNMRSWCSGHLHLCCPRRVFSKRSLPKLVEMYTRVFQRPPDRHSDFSRLARMLTGNAIALVLGGGGARGCAQVGILRALAECGVPVDIIGGTSIGAFMGALFAEERSYSQTRIRAKQWAEGMTSMMKTILDLTYPITSMFSGTGFNSSISNIFKDRQIEDLWLPYFAITTDITASAMRVHTDGSLWRYVRASMSLSGYMPPLCDPKDGHLLMDGGYINNLPADVARSMGAKVVIAIDVGSRDETDLTNYGDALSGWWLLWKRWNPLATKVKVLNMAEIQTRLAYVCCVRQLEMVKNSDYCEYLRPPIDSYRTLDFGKFDEICEVGYQHGRTVFDIWVRSGVLEKMLQDQQGTSKRKDCGVFTCPNSSFTDLAEIVSRIEPAKVAAVDDESDYQTEYEEELPAIPKETYADFQSTGIELDSDSEYEPSMLQGPPSLTSPEQSQDSFPWLPNQDDQGPRLEHPS.

Residues 1–36 (MQNEEDACLEAGYCLGTTLSSWRLHFMEEQSQSTML) are Lumenal-facing. The helical transmembrane segment at 37–57 (MGIGIGALLTLAFVGITFFFV) threads the bilayer. The Cytoplasmic segment spans residues 58–1352 (YRRVRRLRRA…DQGPRLEHPS (1295 aa)). 170–297 (VLGHFEKPLF…VRVVQIIMVR (128 aa)) contributes to the a nucleoside 3',5'-cyclic phosphate binding site. Residues 340–364 (MSYGPEEQLERSLRPSEFSSSDHGS) form a disordered region. Ser-341 and Ser-379 each carry phosphoserine. Residues 384-411 (SNHGEVDELRQSQGSGSNTSAFQESHEG) are disordered. The segment covering 394–406 (QSQGSGSNTSAFQ) has biased composition (polar residues). A nucleoside 3',5'-cyclic phosphate is bound by residues 499–585 (FLHV…YEIM) and 613–718 (ALDW…LGEK). The interval 681–967 (VHAVRDSELA…RGCAQVGILR (287 aa)) is involved in the binding to lipid droplets. The PNPLA domain occupies 950–1116 (LVLGGGGARG…INNLPADVAR (167 aa)). The GXGXXG motif lies at 954–959 (GGGARG). Residues 981–985 (GTSIG) carry the GXSXG motif. The active-site Nucleophile is the Ser-983. Residue Asp-1103 is the Proton acceptor of the active site. The short motif at 1103–1105 (DGG) is the DGA/G element. Ser-1280 is subject to Phosphoserine. Thr-1284 bears the Phosphothreonine mark. The tract at residues 1295-1352 (KETYADFQSTGIELDSDSEYEPSMLQGPPSLTSPEQSQDSFPWLPNQDDQGPRLEHPS) is disordered. Residues 1323 to 1334 (PSLTSPEQSQDS) show a composition bias toward polar residues.

Belongs to the NTE family. As to expression, expressed in white and brown adipose tissue, cardiac muscle, skeletal muscle, and testis. In terms of tissue distribution, expressed in white adipose tissue, cardiac muscle, skeletal muscle, and testis.

The protein localises to the endoplasmic reticulum membrane. The protein resides in the lipid droplet. It carries out the reaction a 1-acyl-sn-glycero-3-phosphocholine + H2O = sn-glycerol 3-phosphocholine + a fatty acid + H(+). The catalysed reaction is 1-(9Z-octadecenoyl)-sn-glycero-3-phosphocholine + H2O = sn-glycerol 3-phosphocholine + (9Z)-octadecenoate + H(+). It catalyses the reaction 1-(9Z-octadecenoyl)-sn-glycero-3-phosphoethanolamine + H2O = sn-glycero-3-phosphoethanolamine + (9Z)-octadecenoate + H(+). The enzyme catalyses 1-(9Z-octadecenoyl)-sn-glycero-3-phospho-L-serine + H2O = sn-glycero-3-phospho-L-serine + (9Z)-octadecenoate + H(+). It carries out the reaction 1-hexadecanoyl-sn-glycero-3-phosphocholine + H2O = sn-glycerol 3-phosphocholine + hexadecanoate + H(+). The catalysed reaction is 1-hexadecanoyl-sn-glycero-3-phosphate + H2O = sn-glycerol 3-phosphate + hexadecanoate + H(+). CAMP does not regulate lysophospholipase activity in vitro. Slightly inhibited by organophosphorus (OP) compounds such as mipafox, which is likely why mice are less sensitive to distal axonophathy induced by OPs compared to humans. In terms of biological role, lysophospholipase which preferentially deacylates unsaturated lysophosphatidylcholine (C18:1), generating glycerophosphocholine. Can also deacylate, to a lesser extent, lysophosphatidylethanolamine (C18:1), lysophosphatidyl-L-serine (C18:1) and lysophosphatidic acid (C16:0). Functionally, lysophospholipase. Lacks lysophospholipase activity. In Mus musculus (Mouse), this protein is Patatin-like phospholipase domain-containing protein 7 (Pnpla7).